A 156-amino-acid chain; its full sequence is Cyclic pyranopterin monophosphate synthase (156 aa).

Substrate is bound by residues 73–75 (LCH) and 110–111 (ME). Asp125 is a catalytic residue.

Belongs to the MoaC family. In terms of assembly, homohexamer; trimer of dimers.

It carries out the reaction (8S)-3',8-cyclo-7,8-dihydroguanosine 5'-triphosphate = cyclic pyranopterin phosphate + diphosphate. It functions in the pathway cofactor biosynthesis; molybdopterin biosynthesis. Functionally, catalyzes the conversion of (8S)-3',8-cyclo-7,8-dihydroguanosine 5'-triphosphate to cyclic pyranopterin monophosphate (cPMP). In Stutzerimonas stutzeri (strain A1501) (Pseudomonas stutzeri), this protein is Cyclic pyranopterin monophosphate synthase.